The chain runs to 132 residues: Anti-sigma-E factor RseA (132 aa).

Residue Thr36 is modified to Phosphothreonine; by PknB. Zn(2+)-binding residues include His63, Cys67, and Cys70. The interval 106 to 132 (RTPEVTPDVSEQAKFADDPTRGRRKRR) is disordered.

Belongs to the zinc-associated anti-sigma factor (ZAS) superfamily. Interacts with ECF RNA polymerase sigma factor SigE, interaction is abrogated by treatment of cells with H(2)O(2), detergent or vancomycin (the latter 2 cause surface stress). This probably inhibits the interaction of SigE with the RNA polymerase catalytic core. Requires Zn(2+) as cofactor. In terms of processing, phosphorylated by PknB on Thr-36; can be dephosphorylated (at least in vitro) by PstP. Phosphorylation is the signal for subsequent degradation by the ClpC1-ClpP2 complex. Post-translationally, degraded following vancomycin treatment (surface stress) by a ClpC1-ClpP2 complex.

It localises to the cytoplasm. Its function is as follows. An anti-sigma factor for extracytoplasmic function (ECF) sigma factor SigE. ECF sigma factors are held in an inactive form by an anti-sigma factor. This Mycolicibacterium smegmatis (strain ATCC 700084 / mc(2)155) (Mycobacterium smegmatis) protein is Anti-sigma-E factor RseA (rseA).